An 87-amino-acid polypeptide reads, in one-letter code: U3-theraphotoxin-Hhn1b (87 aa).

Residues 1-24 form the signal peptide; sequence MVNMKASMFLTFAGLVLLFVVCYA. A propeptide spanning residues 25-52 is cleaved from the precursor; the sequence is SESEEKEFPREMLSSIFAVDNDFKQEER. Disulfide bonds link cysteine 54-cysteine 67 and cysteine 61-cysteine 72.

It belongs to the neurotoxin 10 (Hwtx-1) family. 51 (Hntx-8) subfamily. Hntx-8 sub-subfamily. Expressed by the venom gland.

It localises to the secreted. Functionally, ion channel inhibitor. The polypeptide is U3-theraphotoxin-Hhn1b (Cyriopagopus hainanus (Chinese bird spider)).